The following is a 436-amino-acid chain: 3-ketoacyl-CoA thiolase (436 aa).

The Acyl-thioester intermediate role is filled by Cys-99. Residues His-392 and Cys-422 each act as proton acceptor in the active site.

This sequence belongs to the thiolase-like superfamily. Thiolase family. In terms of assembly, heterotetramer of two alpha chains (FadJ) and two beta chains (FadI).

The protein localises to the cytoplasm. It carries out the reaction an acyl-CoA + acetyl-CoA = a 3-oxoacyl-CoA + CoA. It participates in lipid metabolism; fatty acid beta-oxidation. Its function is as follows. Catalyzes the final step of fatty acid oxidation in which acetyl-CoA is released and the CoA ester of a fatty acid two carbons shorter is formed. The chain is 3-ketoacyl-CoA thiolase from Escherichia coli (strain 55989 / EAEC).